An 884-amino-acid chain; its full sequence is Pyruvate, phosphate dikinase (884 aa).

The tract at residues M1–K351 is N-terminal. Residue R99 coordinates ATP. A linker 1 region spans residues R352–S408. The central stretch occupies residues P409 to I507. T462 is subject to Phosphothreonine; by PDRP1. H464 acts as the Tele-phosphohistidine intermediate in catalysis. The segment at N508–V542 is linker 2. The C-terminal stretch occupies residues L543 to Q884. Substrate contacts are provided by R570, R626, E753, G774, T775, N776, and D777. Mg(2+) is bound at residue E753. D777 provides a ligand contact to Mg(2+). C839 (proton donor) is an active-site residue.

This sequence belongs to the PEP-utilizing enzyme family. In terms of assembly, homodimer. It depends on Mg(2+) as a cofactor. Phosphorylation of Thr-462 in the dark inactivates the enzyme. Dephosphorylation upon light stimulation reactivates the enzyme.

The enzyme catalyses pyruvate + phosphate + ATP = phosphoenolpyruvate + AMP + diphosphate + H(+). Activated by light-induced dephosphorylation. Inhibited by dark-induced phosphorylation. Both reactions are catalyzed by PDRP1. Catalyzes the reversible phosphorylation of pyruvate and phosphate. The chain is Pyruvate, phosphate dikinase from Giardia intestinalis (Giardia lamblia).